The chain runs to 189 residues: UPF0301 protein CCA_00630 (189 aa).

The protein belongs to the UPF0301 (AlgH) family.

In Chlamydia caviae (strain ATCC VR-813 / DSM 19441 / 03DC25 / GPIC) (Chlamydophila caviae), this protein is UPF0301 protein CCA_00630.